We begin with the raw amino-acid sequence, 255 residues long: MLKIGPYEFQSRLLLGTGKYPDLEVQKQAVEVSGAEILTFAVRRMNIFEPNQPNFLENLDLTKYKLLPNTAGAKTAEEAVRIARLAKASGLCDMIKVEVIGCEKTLLPDPVETLKATEILLEEGFIVLPYTSDDVVLAKRLQELGCHAVMPGASPIGSGQGIVNPLNLSLIIEQATVPVIVDAGIGSPADAAFAMELGADGVLLNTAVSGAADPVKMAKAMKLAVEAGRLGYEAGRIPKKRYATASSPMEGMSVV.

The Schiff-base intermediate with DXP role is filled by Lys96. 1-deoxy-D-xylulose 5-phosphate is bound by residues Gly157, 183-184 (AG), and 205-206 (NT).

It belongs to the ThiG family. Homotetramer. Forms heterodimers with either ThiH or ThiS.

Its subcellular location is the cytoplasm. It catalyses the reaction [ThiS sulfur-carrier protein]-C-terminal-Gly-aminoethanethioate + 2-iminoacetate + 1-deoxy-D-xylulose 5-phosphate = [ThiS sulfur-carrier protein]-C-terminal Gly-Gly + 2-[(2R,5Z)-2-carboxy-4-methylthiazol-5(2H)-ylidene]ethyl phosphate + 2 H2O + H(+). It participates in cofactor biosynthesis; thiamine diphosphate biosynthesis. Its function is as follows. Catalyzes the rearrangement of 1-deoxy-D-xylulose 5-phosphate (DXP) to produce the thiazole phosphate moiety of thiamine. Sulfur is provided by the thiocarboxylate moiety of the carrier protein ThiS. In vitro, sulfur can be provided by H(2)S. The chain is Thiazole synthase from Geobacillus sp. (strain WCH70).